A 314-amino-acid chain; its full sequence is 4-hydroxy-3-methylbut-2-enyl diphosphate reductase (314 aa).

Position 12 (cysteine 12) interacts with [4Fe-4S] cluster. (2E)-4-hydroxy-3-methylbut-2-enyl diphosphate contacts are provided by histidine 41 and histidine 74. Residues histidine 41 and histidine 74 each coordinate dimethylallyl diphosphate. Isopentenyl diphosphate is bound by residues histidine 41 and histidine 74. [4Fe-4S] cluster is bound at residue cysteine 96. Histidine 124 is a (2E)-4-hydroxy-3-methylbut-2-enyl diphosphate binding site. Histidine 124 lines the dimethylallyl diphosphate pocket. Residue histidine 124 participates in isopentenyl diphosphate binding. Glutamate 126 functions as the Proton donor in the catalytic mechanism. Threonine 167 contributes to the (2E)-4-hydroxy-3-methylbut-2-enyl diphosphate binding site. Cysteine 197 is a binding site for [4Fe-4S] cluster. (2E)-4-hydroxy-3-methylbut-2-enyl diphosphate-binding residues include serine 225, serine 226, asparagine 227, and serine 269. Positions 225, 226, 227, and 269 each coordinate dimethylallyl diphosphate. Serine 225, serine 226, asparagine 227, and serine 269 together coordinate isopentenyl diphosphate.

Belongs to the IspH family. Requires [4Fe-4S] cluster as cofactor.

The enzyme catalyses isopentenyl diphosphate + 2 oxidized [2Fe-2S]-[ferredoxin] + H2O = (2E)-4-hydroxy-3-methylbut-2-enyl diphosphate + 2 reduced [2Fe-2S]-[ferredoxin] + 2 H(+). The catalysed reaction is dimethylallyl diphosphate + 2 oxidized [2Fe-2S]-[ferredoxin] + H2O = (2E)-4-hydroxy-3-methylbut-2-enyl diphosphate + 2 reduced [2Fe-2S]-[ferredoxin] + 2 H(+). The protein operates within isoprenoid biosynthesis; dimethylallyl diphosphate biosynthesis; dimethylallyl diphosphate from (2E)-4-hydroxy-3-methylbutenyl diphosphate: step 1/1. Its pathway is isoprenoid biosynthesis; isopentenyl diphosphate biosynthesis via DXP pathway; isopentenyl diphosphate from 1-deoxy-D-xylulose 5-phosphate: step 6/6. Catalyzes the conversion of 1-hydroxy-2-methyl-2-(E)-butenyl 4-diphosphate (HMBPP) into a mixture of isopentenyl diphosphate (IPP) and dimethylallyl diphosphate (DMAPP). Acts in the terminal step of the DOXP/MEP pathway for isoprenoid precursor biosynthesis. The polypeptide is 4-hydroxy-3-methylbut-2-enyl diphosphate reductase (Psychromonas ingrahamii (strain DSM 17664 / CCUG 51855 / 37)).